Consider the following 1893-residue polypeptide: CDK5 regulatory subunit-associated protein 2 (1893 aa).

The tract at residues 51–94 is CM1 motif; interacts with the gTuRC; sequence TVSPTRARNMKDFENQITELKKENFNLKLRIYFLEERMQQEFHG. Residues 58-196 are interaction with NCKAP5L; that stretch reads RNMKDFENQI…TEKALRLRLE (139 aa). The residue at position 547 (Ser-547) is a Phosphoserine. The interaction with MAPRE1 stretch occupies residues 926–1208; the sequence is PGITNREAKK…LENLKQQLEE (283 aa). Residue Thr-1001 is modified to Phosphothreonine. Disordered regions lie at residues 1015-1071 and 1084-1105; these read AAYQ…NPED and SKSQ…SINT. Residues 1034-1048 show a composition bias toward basic and acidic residues; it reads WRDKEMDSDQQRSYE. Ser-1238 carries the phosphoserine modification. A disordered region spans residues 1347–1381; the sequence is LPESPEPSASHALSDYETSEKSFFSRDQKQDNETE. Basic and acidic residues predominate over residues 1364 to 1381; it reads TSEKSFFSRDQKQDNETE. Ser-1490 carries the post-translational modification Phosphoserine. 2 stretches are compositionally biased toward basic and acidic residues: residues 1500 to 1519 and 1651 to 1661; these read SVKE…ERHN and PDKHDGDKYPM. Disordered stretches follow at residues 1500 to 1521, 1646 to 1706, and 1754 to 1774; these read SVKE…HNQQ, EVPL…ATST, and QTQE…PHPA. Ser-1663 and Ser-1666 each carry phosphoserine. Polar residues-rich tracts occupy residues 1663-1706 and 1754-1766; these read SDNS…ATST and QTQE…SQEL. An interaction with CDK5R1 region spans residues 1726 to 1768; the sequence is HVLGLIEDYEALLKQISQGQRLLAEMDIQTQEAPSSTSQELGT. The segment at 1726-1893 is interaction with PCNT and AKAP9; it reads HVLGLIEDYE…GTCSPSRPGS (168 aa). Residues 1861-1870 form a required for centrosomal attachment, Golgi localization and CALM1 interaction region; the sequence is VVTHKILRKA. Ser-1893 bears the Phosphoserine mark.

Homodimer. Interacts with CDK5R1 (p35 form). CDK5RAP1, CDK5RAP2 and CDK5RAP3 show competitive binding to CDK5R1. May form a complex with CDK5R1 and CDK5. Interacts with pericentrin/PCNT; the interaction is leading to centrosomal and Golgi localization of CDK5RAP2 and PCNT. Interacts with AKAP9; the interaction targets CDK5RAP2 and AKAP9 to Golgi apparatus. Interacts with MAPRE1; the interaction is direct and targets CDK5RAP2 and EB1/MAPRE1 to microtubule plus ends. Interacts with TUBG1; the interaction is leading to the centrosomal localization of CDK5RAP2 and TUBG1. Interacts with TUBGCP3. Interacts with CALM1. Interacts with CDC20. Interacts with CEP68; degradation of CEP68 in early mitosis leads to removal of CDK5RAP2 from the centrosome which promotes centriole disengagement and subsequent centriole separation. Interacts with NCKAP5L. Forms a pericentrosomal complex with AKAP9, MAPRE1 and PDE4DIP isoform 13/MMG8/SMYLE; within this complex, MAPRE1 binding to CDK5RAP2 may be mediated by PDE4DIP. Interacts with LGALS3BP; this interaction may connect the pericentrosomal complex to the gamma-tubulin ring complex (gTuRC) to promote microtubule assembly and acetylation. Interacts with CCDC66. Associates (via CM1 motif) with TUBGCP2 of the gTuRC; the interaction plays a role in gTuRC activation. In terms of processing, phosphorylated in vitro by CDK5. In terms of tissue distribution, widely expressed. Expressed in heart, brain, placenta, lung, liver, skeletal muscle, kidney and pancreas.

Its subcellular location is the cytoplasm. The protein localises to the cytoskeleton. It localises to the microtubule organizing center. It is found in the centrosome. The protein resides in the golgi apparatus. Functionally, potential regulator of CDK5 activity via its interaction with CDK5R1. Negative regulator of centriole disengagement (licensing) which maintains centriole engagement and cohesion. Involved in regulation of mitotic spindle orientation. Plays a role in the spindle checkpoint activation by acting as a transcriptional regulator of both BUBR1 and MAD2 promoter. Together with EB1/MAPRE1, may promote microtubule polymerization, bundle formation, growth and dynamics at the plus ends. Regulates centrosomal maturation by recruitment of the gamma-tubulin ring complex (gTuRC) onto centrosomes. In complex with PDE4DIP isoform 13/MMG8/SMYLE, MAPRE1 and AKAP9, contributes to microtubules nucleation and extension from the centrosome to the cell periphery. Required for the recruitment of AKAP9 to centrosomes. Plays a role in neurogenesis. This Homo sapiens (Human) protein is CDK5 regulatory subunit-associated protein 2 (CDK5RAP2).